We begin with the raw amino-acid sequence, 827 residues long: Rho GTPase-activating protein 6 (827 aa).

The PH domain maps to 18 to 125 (TVYKSGPLFI…WKAALEQALA (108 aa)). The Rho-GAP domain occupies 172-371 (LALEEIDGSP…ALLEDYGNMI (200 aa)). 2 disordered regions span residues 379 to 437 (CSTS…SDYA) and 517 to 561 (YTTS…SSGN). Residues 401-412 (IVVKHPDLHTLD) are compositionally biased toward basic and acidic residues. Positions 413–423 (IEEGETDDDND) are enriched in acidic residues. Residues 517–543 (YTTSAEKPASKTTGSSTVNSKRSSSWG) are compositionally biased toward polar residues. The stretch at 560–684 (GNDELLIQRL…HQLSQQRQHH (125 aa)) forms a coiled coil.

Its function is as follows. Acts as a GTPase activator for the Rac-type GTPase by converting it to an inactive GDP-bound state. This Arabidopsis thaliana (Mouse-ear cress) protein is Rho GTPase-activating protein 6 (ROPGAP6).